A 437-amino-acid chain; its full sequence is Probable glycine dehydrogenase (decarboxylating) subunit 1 (437 aa).

The protein belongs to the GcvP family. N-terminal subunit subfamily. In terms of assembly, the glycine cleavage system is composed of four proteins: P, T, L and H. In this organism, the P 'protein' is a heterodimer of two subunits.

The catalysed reaction is N(6)-[(R)-lipoyl]-L-lysyl-[glycine-cleavage complex H protein] + glycine + H(+) = N(6)-[(R)-S(8)-aminomethyldihydrolipoyl]-L-lysyl-[glycine-cleavage complex H protein] + CO2. The glycine cleavage system catalyzes the degradation of glycine. The P protein binds the alpha-amino group of glycine through its pyridoxal phosphate cofactor; CO(2) is released and the remaining methylamine moiety is then transferred to the lipoamide cofactor of the H protein. The protein is Probable glycine dehydrogenase (decarboxylating) subunit 1 of Thermotoga petrophila (strain ATCC BAA-488 / DSM 13995 / JCM 10881 / RKU-1).